The following is a 252-amino-acid chain: Phosphate import ATP-binding protein PstB 1 (252 aa).

Positions 6 to 247 (LKVNDLSVYY…PQKQETEDYI (242 aa)) constitute an ABC transporter domain. An ATP-binding site is contributed by 38–45 (GPSGSGKS).

Belongs to the ABC transporter superfamily. Phosphate importer (TC 3.A.1.7) family. The complex is composed of two ATP-binding proteins (PstB), two transmembrane proteins (PstC and PstA) and a solute-binding protein (PstS).

It localises to the cell membrane. The enzyme catalyses phosphate(out) + ATP + H2O = ADP + 2 phosphate(in) + H(+). Part of the ABC transporter complex PstSACB involved in phosphate import. Responsible for energy coupling to the transport system. The protein is Phosphate import ATP-binding protein PstB 1 of Streptococcus mutans serotype c (strain ATCC 700610 / UA159).